Reading from the N-terminus, the 78-residue chain is Large ribosomal subunit protein bL28 (78 aa).

The interval 1–23 (MSRICQITGKKPLSGNKRSHSMN) is disordered.

The protein belongs to the bacterial ribosomal protein bL28 family.

The sequence is that of Large ribosomal subunit protein bL28 from Wigglesworthia glossinidia brevipalpis.